Here is a 162-residue protein sequence, read N- to C-terminus: Endoribonuclease YbeY (162 aa).

Zn(2+) contacts are provided by His-117, His-121, and His-127.

The protein belongs to the endoribonuclease YbeY family. Zn(2+) is required as a cofactor.

It localises to the cytoplasm. In terms of biological role, single strand-specific metallo-endoribonuclease involved in late-stage 70S ribosome quality control and in maturation of the 3' terminus of the 16S rRNA. The sequence is that of Endoribonuclease YbeY from Francisella tularensis subsp. tularensis (strain WY96-3418).